A 353-amino-acid polypeptide reads, in one-letter code: DNA replication and repair protein RecF (353 aa).

30 to 37 (GANGQGKT) provides a ligand contact to ATP.

This sequence belongs to the RecF family.

The protein resides in the cytoplasm. Its function is as follows. The RecF protein is involved in DNA metabolism; it is required for DNA replication and normal SOS inducibility. RecF binds preferentially to single-stranded, linear DNA. It also seems to bind ATP. This is DNA replication and repair protein RecF from Carboxydothermus hydrogenoformans (strain ATCC BAA-161 / DSM 6008 / Z-2901).